The primary structure comprises 378 residues: MNIWLSMLTTTGLGAIIGGFTNHLAIKMLFRPHRPMYIGKFQVPFTPGLIPKRRDELAVQLGKMVVEHLLTPEGIGKKLTNEEFQKGLIHWAQVEVDKVMTNEQSLRNMLEKWNVAHVEKEVTEKIEQVITEKIQAFLEEYYTYTWEQALPHSVHEKIESAIPNVSAFILGRATQFFESEEGKTRLSKMIDDFFASRGTLLNLVGMFLGNVSVVDRVQPEVIKFLGQDGTKQLLTDVLQKEWEKLKGRDVKEVETFVEKEMIVSSILSAVKVEETVSKFLNQSVQQVCEPVRETMIEKVVPSAVTKVLKWGAKNVESILNKLHLAEIVQQEVSTFSTERLEDLVLSITKNELKMITYLGALLGGMIGIVQGLLLLFLK.

Helical transmembrane passes span M1 to T21 and Y357 to L377.

The protein belongs to the UPF0754 family.

It is found in the cell membrane. In Bacillus cereus (strain ATCC 10987 / NRS 248), this protein is UPF0754 membrane protein BCE_0952.